The chain runs to 1699 residues: DNA polymerase (1699 aa).

DOD-type homing endonuclease domains follow at residues 770 to 903 (LLGY…SLGI) and 1222 to 1361 (LIGL…LVGV).

Belongs to the DNA polymerase type-B family. Post-translationally, this protein undergoes a protein self splicing that involves a post-translational excision of the intervening region (intein) followed by peptide ligation.

The catalysed reaction is DNA(n) + a 2'-deoxyribonucleoside 5'-triphosphate = DNA(n+1) + diphosphate. In terms of biological role, in addition to polymerase activity, this DNA polymerase exhibits 3' to 5' exonuclease activity. PI-TspGE8I and PI-TspGE8II are endonucleases. The chain is DNA polymerase (pol) from Thermococcus sp. (strain GE8).